Reading from the N-terminus, the 483-residue chain is Cobyric acid synthase (483 aa).

The GATase cobBQ-type domain occupies 248–435; it reads LLKVVVPVLP…LHGLFETPAA (188 aa). The active-site Nucleophile is Cys-329. The active site involves His-427.

Belongs to the CobB/CobQ family. CobQ subfamily.

The protein operates within cofactor biosynthesis; adenosylcobalamin biosynthesis. Catalyzes amidations at positions B, D, E, and G on adenosylcobyrinic A,C-diamide. NH(2) groups are provided by glutamine, and one molecule of ATP is hydrogenolyzed for each amidation. In Pseudomonas fluorescens (strain ATCC BAA-477 / NRRL B-23932 / Pf-5), this protein is Cobyric acid synthase.